We begin with the raw amino-acid sequence, 415 residues long: MQQDYLSQQRFSALPLHPIVRGALAKKGFDFCTPIQALSLPISLNGRDVAGQAQTGTGKTMAFLTATFHHLLTHQDPNLEYPHPRALILAPTRELAVQISNDAEFLAKASGLKTALAYGGDGYDKQLQVIECGVDILIGTTGRVIDYVKQGVIGLDEIQVVVLDEADRMFDLGFIRDIRYLLRKCPAPQARLTMLFSATLSYKVRELAFEDMNDPEYIEIEPEQKTGHRIKEELFYPSNQDKMALLLTLMEDEWPERCIVFANTKHRCEEIWGYLAADGHRVGLLTGDVAQKKRLSLLKQFTDGDLDILVATDVAARGLHISDVTHVFNYDLPDDREDYVHRIGRTGRAGESGVSISFACEEYAMNLPAIEEYIGHSIPVSQYETEALLELPKPYRLKRAVPPQGHTRHRSYHTK.

Residues 9–37 (QRFSALPLHPIVRGALAKKGFDFCTPIQA) carry the Q motif motif. Positions 40–218 (LPISLNGRDV…FEDMNDPEYI (179 aa)) constitute a Helicase ATP-binding domain. ATP is bound at residue 53-60 (AQTGTGKT). A DEAD box motif is present at residues 164-167 (DEAD). The 149-residue stretch at 241-389 (DKMALLLTLM…VSQYETEALL (149 aa)) folds into the Helicase C-terminal domain.

It belongs to the DEAD box helicase family. RhlB subfamily. Component of the RNA degradosome, which is a multiprotein complex involved in RNA processing and mRNA degradation.

The protein localises to the cytoplasm. The catalysed reaction is ATP + H2O = ADP + phosphate + H(+). DEAD-box RNA helicase involved in RNA degradation. Has RNA-dependent ATPase activity and unwinds double-stranded RNA. This chain is ATP-dependent RNA helicase RhlB, found in Haemophilus influenzae (strain PittGG).